Consider the following 269-residue polypeptide: Formamidopyrimidine-DNA glycosylase (269 aa).

The active-site Schiff-base intermediate with DNA is P2. The Proton donor role is filled by E3. K57 functions as the Proton donor; for beta-elimination activity in the catalytic mechanism. Residues H90, R109, and K150 each coordinate DNA. Residues 235–269 form an FPG-type zinc finger; sequence QVYGRKGEPCRVCGTPIVATKHAQRATFYCRQCQK. The Proton donor; for delta-elimination activity role is filled by R259.

The protein belongs to the FPG family. As to quaternary structure, monomer. Zn(2+) is required as a cofactor.

The catalysed reaction is Hydrolysis of DNA containing ring-opened 7-methylguanine residues, releasing 2,6-diamino-4-hydroxy-5-(N-methyl)formamidopyrimidine.. The enzyme catalyses 2'-deoxyribonucleotide-(2'-deoxyribose 5'-phosphate)-2'-deoxyribonucleotide-DNA = a 3'-end 2'-deoxyribonucleotide-(2,3-dehydro-2,3-deoxyribose 5'-phosphate)-DNA + a 5'-end 5'-phospho-2'-deoxyribonucleoside-DNA + H(+). Its function is as follows. Involved in base excision repair of DNA damaged by oxidation or by mutagenic agents. Acts as a DNA glycosylase that recognizes and removes damaged bases. Has a preference for oxidized purines, such as 7,8-dihydro-8-oxoguanine (8-oxoG). Has AP (apurinic/apyrimidinic) lyase activity and introduces nicks in the DNA strand. Cleaves the DNA backbone by beta-delta elimination to generate a single-strand break at the site of the removed base with both 3'- and 5'-phosphates. The polypeptide is Formamidopyrimidine-DNA glycosylase (Escherichia coli O7:K1 (strain IAI39 / ExPEC)).